Here is an 848-residue protein sequence, read N- to C-terminus: MKRSVLTIILFFSCQFWHAFASSVLAIDYGTEWTKAALIKPGIPLEIVLTKDTRRKEQSAVAFKGNERIFGVDASNLATRFPAHSIRNVKELLDTAGLESVLVQKYQSSYPAIQLVENEETTSGISFVISDEENYSLEEIIAMTMEHYISLAEEMAHEKITDLVLTVPPHFNELQRSILLEAARILNKHVLALIDDNVAVAIEYSLSRSFSTDPTYNIIYDSGSGSTSATVISFDTVEGSSLGKKQNITRIRALASGFTLKLSGNEINRKLIGFMKNSFYQKHGIDLSHNHRALARLEKEALRVKHILSANSEAIASIEELADGIDFRLKITRSVLESLCKDMEDAAVEPINKALKKANLTFSEINSIILFGGASRIPFIQSTLADYVSSDKISKNVNADEASVKGAAFYGASLTKSFRVKPLIVQDIINYPYLLSLGTSEYIVALPDSTPYGMQHNVTIHNVSTIGKHPSFPLSNNGELIGEFTLSNITDVEKVCACSNKNIQISFSSDRTKGILVPLSAIMTCEHGELSSKHKLGDRVKSLFGSHDESGLRNNESYPIGFTYKKYGEMSDNALRLASAKLERRLQIDKSKAAHDNALNELETLLYRAQAMVDDDEFLEFANPEETKILKNDSVESYDWLIEYGSQSPTSEVTDRYKKLDDTLKSISFRFDQAKQFNTSLENFKNALERAESLLTNFDVPDYPLNVYDEKDVKRVNSLRGTSYKKLGNQYYNDTQWLKDNLDSHLSHTLSEDPLIKVEELEEKAKRLQELTYEYLRRSLQQPKLKAKKGASSSSTAESKVEDETFTNDIEPTTALNSTSTQETEKSRASVTQRPSSLQQEIDDSDEL.

Positions 1 to 21 (MKRSVLTIILFFSCQFWHAFA) are cleaved as a signal peptide. 11 N-linked (GlcNAc...) asparagine glycosylation sites follow: asparagine 134, asparagine 247, asparagine 359, asparagine 457, asparagine 462, asparagine 488, asparagine 555, asparagine 632, asparagine 678, asparagine 733, and asparagine 817. The tract at residues 784-848 (KLKAKKGASS…QQEIDDSDEL (65 aa)) is disordered. 2 stretches are compositionally biased toward polar residues: residues 807–822 (TNDIEPTTALNSTSTQ) and 829–840 (ASVTQRPSSLQQ). Positions 845-848 (SDEL) match the Prevents secretion from ER motif.

The protein belongs to the heat shock protein 70 family.

Its subcellular location is the endoplasmic reticulum lumen. It catalyses the reaction ATP + H2O = ADP + phosphate + H(+). Its function is as follows. Chaperone required for protein translocation and folding in the endoplasmic reticulum. The protein is Heat shock protein 70 homolog lhs1 of Schizosaccharomyces pombe (strain 972 / ATCC 24843) (Fission yeast).